The sequence spans 417 residues: Phosphoglycerate kinase, cytosolic (417 aa).

Residues V23, D24, F25, N26, R39, S61, H62, G64, R65, R132, H168, and R169 each contribute to the (2R)-3-phosphoglycerate site. Residues G214 and A215 each contribute to the ADP site. G214 contributes to the CDP binding site. AMP is bound by residues A215 and K216. A215 is an ATP binding site. Position 215 (A215) interacts with Mg(2+). A (2R)-3-phosphoglycerate-binding site is contributed by K216. D219 is a binding site for CDP. Position 219 (D219) interacts with Mg(2+). K220 and G238 together coordinate ADP. K220 lines the AMP pocket. K220 contributes to the ATP binding site. G238 serves as a coordination point for CDP. Positions 239 and 311 each coordinate AMP. 2 residues coordinate ATP: A239 and A311. ADP contacts are provided by A311 and N335. Residues G336 and F341 each contribute to the CDP site. Residues F341, E342, D374, and T375 each contribute to the ADP site. E342 contributes to the AMP binding site. Residues E342, D374, and T375 each contribute to the ATP site. Residue D374 coordinates Mg(2+).

Belongs to the phosphoglycerate kinase family. Monomer. It depends on Mg(2+) as a cofactor.

Its subcellular location is the cytoplasm. The catalysed reaction is (2R)-3-phosphoglycerate + ATP = (2R)-3-phospho-glyceroyl phosphate + ADP. It functions in the pathway carbohydrate degradation; glycolysis; pyruvate from D-glyceraldehyde 3-phosphate: step 2/5. The polypeptide is Phosphoglycerate kinase, cytosolic (PGKB) (Crithidia fasciculata).